A 294-amino-acid chain; its full sequence is uncharacterized protein (294 aa).

This is an uncharacterized protein from Halobacterium salinarum (strain ATCC 700922 / JCM 11081 / NRC-1) (Halobacterium halobium).